The following is a 440-amino-acid chain: MGPPGSPWQWVPLLLGLLLPPAAPFWLLNVLFPPHTTPKAELSNHTRPVILVPGCLGNQLEAKLDKPDVVNWMCYRKTEDFFTIWLDLNMFLPLGVDCWIDNTRVVYNRSSGLVSNAPGVQIRVPGFGKTYSVEYLDSSKLAGYLHTLVQNLVNNGYVRDETVRAAPYDWRLEPGQQEEYYHKLAGLVEEMHAAYGKPVFLIGHSLGCLHLLYFLLRQPQAWKDRFIDGFISLGAPWGGSIKPMLVLASGDNQGIPIMSSIKLKEEQRITTTSPWMFPSRLAWPEDHVFISTPSFNYTGRDFQRFFADLHFEEGWYMWLQSRDLLAGLPAPGVEVYCLYGVGLPTPRTYIYDHGFPYTDPVDVLYEDGDDTVATRSTELCGLWQGRQPQPVHLLPLRGIQHLNMVFSNQTLEHINAILLGAYRQGPPASLTASPEPPPPE.

The signal sequence occupies residues 1–24; that stretch reads MGPPGSPWQWVPLLLGLLLPPAAP. N-linked (GlcNAc...) asparagine glycosylation is present at Asn44. An intrachain disulfide couples Cys74 to Cys98. Asn108 is a glycosylation site (N-linked (GlcNAc...) asparagine). Ser205 functions as the Nucleophile in the catalytic mechanism. Residue Asn296 is glycosylated (N-linked (GlcNAc...) asparagine). Cys337 and Cys380 are disulfide-bonded. Residues Asp369 and His401 each act as charge relay system in the active site. Asn408 carries an N-linked (GlcNAc...) asparagine glycan.

Belongs to the AB hydrolase superfamily. Lipase family. As to expression, most abundant in liver and cerebellum.

The protein resides in the secreted. The enzyme catalyses a sterol + a 1,2-diacyl-sn-glycero-3-phosphocholine = a sterol ester + a 1-acyl-sn-glycero-3-phosphocholine. With respect to regulation, APOA1 is the most potent activator in plasma. Also activated by APOE, APOC1 and APOA4. In terms of biological role, central enzyme in the extracellular metabolism of plasma lipoproteins. Synthesized mainly in the liver and secreted into plasma where it converts cholesterol and phosphatidylcholines (lecithins) to cholesteryl esters and lysophosphatidylcholines on the surface of high and low density lipoproteins (HDLs and LDLs). The cholesterol ester is then transported back to the liver. Has a preference for plasma 16:0-18:2 or 18:O-18:2 phosphatidylcholines. Also produced in the brain by primary astrocytes, and esterifies free cholesterol on nascent APOE-containing lipoproteins secreted from glia and influences cerebral spinal fluid (CSF) APOE- and APOA1 levels. Together with APOE and the cholesterol transporter ABCA1, plays a key role in the maturation of glial-derived, nascent lipoproteins. Required for remodeling high-density lipoprotein particles into their spherical forms. This is Phosphatidylcholine-sterol acyltransferase (LCAT) from Papio anubis (Olive baboon).